Reading from the N-terminus, the 160-residue chain is MLVLLAAIFVVHIATCVMLFVSTIANVWVVSDSINASVGLWRNCTSGDCSGGLSYGHEDALKAVQAFMILSIIFSVISLIIFVFQLFTMEKGNRFFLSGATMLVCWLCVLIGASIYTHRYANGDSNTFDRSHHGYSFILAWICFCFSFVVGVLYLVLRKK.

Residues 1–21 (MLVLLAAIFVVHIATCVMLFV) traverse the membrane as a helical segment. N-linked (GlcNAc...) asparagine glycans are attached at residues Asn35 and Asn43. A run of 3 helical transmembrane segments spans residues 67–87 (FMIL…FQLF), 95–115 (FFLS…GASI), and 137–157 (FILA…YLVL).

Belongs to the PMP-22/EMP/MP20 family. As to expression, most abundant in squamous epithelia.

It localises to the membrane. In Oryctolagus cuniculus (Rabbit), this protein is Epithelial membrane protein 1 (EMP1).